A 205-amino-acid polypeptide reads, in one-letter code: Probable GTP-binding protein EngB (205 aa).

The EngB-type G domain occupies 27–201 (EGMEIAFAGR…AAKLDSWFSS (175 aa)). GTP-binding positions include 35–42 (GRSNAGKS), 62–66 (GRTQL), 80–83 (DLPG), 147–150 (TKAD), and 180–182 (FSA). 2 residues coordinate Mg(2+): S42 and T64.

This sequence belongs to the TRAFAC class TrmE-Era-EngA-EngB-Septin-like GTPase superfamily. EngB GTPase family. Mg(2+) serves as cofactor.

In terms of biological role, necessary for normal cell division and for the maintenance of normal septation. The sequence is that of Probable GTP-binding protein EngB from Mannheimia succiniciproducens (strain KCTC 0769BP / MBEL55E).